A 172-amino-acid polypeptide reads, in one-letter code: Large ribosomal subunit protein uL10 (172 aa).

This sequence belongs to the universal ribosomal protein uL10 family. As to quaternary structure, part of the ribosomal stalk of the 50S ribosomal subunit. The N-terminus interacts with L11 and the large rRNA to form the base of the stalk. The C-terminus forms an elongated spine to which L12 dimers bind in a sequential fashion forming a multimeric L10(L12)X complex.

In terms of biological role, forms part of the ribosomal stalk, playing a central role in the interaction of the ribosome with GTP-bound translation factors. The sequence is that of Large ribosomal subunit protein uL10 from Idiomarina loihiensis (strain ATCC BAA-735 / DSM 15497 / L2-TR).